We begin with the raw amino-acid sequence, 119 residues long: Large ribosomal subunit protein bL19 (119 aa).

This sequence belongs to the bacterial ribosomal protein bL19 family.

In terms of biological role, this protein is located at the 30S-50S ribosomal subunit interface and may play a role in the structure and function of the aminoacyl-tRNA binding site. This Pediococcus pentosaceus (strain ATCC 25745 / CCUG 21536 / LMG 10740 / 183-1w) protein is Large ribosomal subunit protein bL19.